The following is a 532-amino-acid chain: uncharacterized protein (532 aa).

Helical transmembrane passes span 11–31, 51–71, 126–146, 147–167, and 231–253; these read YLSH…ALII, IEPF…KIFF, LIDI…YTLW, ILYN…IIVF, and YVES…VLLI. One can recognise an ABC transporter domain in the interval 315-531; it reads ICINKLVYEY…MIIPMNNGII (217 aa). 349 to 356 serves as a coordination point for ATP; the sequence is GKSGSGKS.

The protein localises to the membrane. This is an uncharacterized protein from Acanthamoeba polyphaga mimivirus (APMV).